The sequence spans 189 residues: Protein F29A7.6 (189 aa).

The interval 124–161 is disordered; the sequence is KSLGGQKLAALDKKSQSKRERRQQNERNEETTGGRRFN. Positions 133–161 are enriched in basic and acidic residues; that stretch reads ALDKKSQSKRERRQQNERNEETTGGRRFN.

It belongs to the MPP6 family.

This is Protein F29A7.6 from Caenorhabditis elegans.